The chain runs to 365 residues: Succinyl-diaminopimelate desuccinylase (365 aa).

Histidine 64 is a Zn(2+) binding site. The active site involves aspartate 66. Aspartate 95 provides a ligand contact to Zn(2+). Glutamate 125 (proton acceptor) is an active-site residue. 3 residues coordinate Zn(2+): glutamate 126, glutamate 154, and histidine 339.

It belongs to the peptidase M20A family. DapE subfamily. As to quaternary structure, homodimer. Zn(2+) serves as cofactor. Co(2+) is required as a cofactor.

It catalyses the reaction N-succinyl-(2S,6S)-2,6-diaminopimelate + H2O = (2S,6S)-2,6-diaminopimelate + succinate. The protein operates within amino-acid biosynthesis; L-lysine biosynthesis via DAP pathway; LL-2,6-diaminopimelate from (S)-tetrahydrodipicolinate (succinylase route): step 3/3. Functionally, catalyzes the hydrolysis of N-succinyl-L,L-diaminopimelic acid (SDAP), forming succinate and LL-2,6-diaminopimelate (DAP), an intermediate involved in the bacterial biosynthesis of lysine and meso-diaminopimelic acid, an essential component of bacterial cell walls. This Campylobacter fetus subsp. fetus (strain 82-40) protein is Succinyl-diaminopimelate desuccinylase.